The sequence spans 588 residues: A-type ATP synthase subunit A (588 aa).

237–244 (GPFGSGKT) lines the ATP pocket.

Belongs to the ATPase alpha/beta chains family. As to quaternary structure, has multiple subunits with at least A(3), B(3), C, D, E, F, H, I and proteolipid K(x).

Its subcellular location is the cell membrane. The enzyme catalyses ATP + H2O + 4 H(+)(in) = ADP + phosphate + 5 H(+)(out). In terms of biological role, component of the A-type ATP synthase that produces ATP from ADP in the presence of a proton gradient across the membrane. The A chain is the catalytic subunit. The polypeptide is A-type ATP synthase subunit A (Methanoregula boonei (strain DSM 21154 / JCM 14090 / 6A8)).